A 226-amino-acid chain; its full sequence is Cytidylate kinase (226 aa).

10 to 18 (GFSSTGKST) serves as a coordination point for ATP.

Belongs to the cytidylate kinase family. Type 1 subfamily.

It is found in the cytoplasm. It carries out the reaction CMP + ATP = CDP + ADP. The enzyme catalyses dCMP + ATP = dCDP + ADP. This is Cytidylate kinase from Flavobacterium psychrophilum (strain ATCC 49511 / DSM 21280 / CIP 103535 / JIP02/86).